We begin with the raw amino-acid sequence, 469 residues long: Glutamine synthetase (469 aa).

The 85-residue stretch at 13–97 folds into the GS beta-grasp domain; sequence HEVKFVDLRF…IRCDILEPGT (85 aa). The GS catalytic domain maps to 105–469; sequence PRSIAKRAED…PVEFELYYSV (365 aa). Mg(2+) is bound by residues Glu130 and Glu132. Glu208 contacts ATP. Glu213 and Glu221 together coordinate Mg(2+). L-glutamate-binding positions include 265-266 and Gly266; that span reads NG. His270 contributes to the Mg(2+) binding site. ATP contacts are provided by residues 272–274 and Ser274; that span reads HMS. Residues Arg322, Glu328, and Arg340 each contribute to the L-glutamate site. ATP contacts are provided by Arg340, Arg345, and Lys353. Glu358 is a Mg(2+) binding site. Arg360 contributes to the L-glutamate binding site. O-AMP-tyrosine is present on Tyr398.

It belongs to the glutamine synthetase family. Oligomer of 12 subunits arranged in the form of two hexameric ring. Mg(2+) is required as a cofactor.

Its subcellular location is the cytoplasm. It catalyses the reaction L-glutamate + NH4(+) + ATP = L-glutamine + ADP + phosphate + H(+). The activity of this enzyme could be controlled by adenylation under conditions of abundant glutamine. In terms of biological role, catalyzes the ATP-dependent biosynthesis of glutamine from glutamate and ammonia. This chain is Glutamine synthetase, found in Escherichia coli O157:H7.